The following is a 705-amino-acid chain: Dolichyl-diphosphooligosaccharide--protein glycosyltransferase subunit STT3A (705 aa).

At 1-17 the chain is on the cytoplasmic side; the sequence is MTKLGFLRLSYEKQDTL. The chain crosses the membrane as a helical span at residues 18-38; sequence LKLLILSMAAVLSFSTRLFAV. Residues 39–119 are Lumenal-facing; it reads LRFESVIHEF…IDIRNVCVFL (81 aa). Residues 47–49 carry the DXD motif 1 motif; the sequence is EFD. Residue D49 coordinates Mn(2+). Residues 120–138 form a helical membrane-spanning segment; that stretch reads APLFSSFTTIVTYHLTKEL. The Cytoplasmic portion of the chain corresponds to 139-140; the sequence is KD. Residues 141 to 158 form a helical membrane-spanning segment; it reads AGAGLLAAAMIAVVPGYI. Topologically, residues 159–169 are lumenal; sequence SRSVAGSYDNE. Mn(2+) is bound by residues D167 and E169. Positions 167-169 match the DXD motif 2 motif; it reads DNE. The chain crosses the membrane as a helical span at residues 170-189; that stretch reads GIAIFCMLLTYYMWIKAVKT. The Cytoplasmic portion of the chain corresponds to 190–191; it reads GS. The chain crosses the membrane as a helical span at residues 192–206; sequence IYWAAKCALAYFYMV. Topologically, residues 207-211 are lumenal; that stretch reads SSWGG. The chain crosses the membrane as a helical span at residues 212 to 228; sequence YVFLINLIPLHVLVLML. Residues 229 to 233 are Cytoplasmic-facing; that stretch reads TGRFS. A helical membrane pass occupies residues 234–259; that stretch reads HRIYVAYCTVYCLGTILSMQISFVGF. Residues 260–267 lie on the Lumenal side of the membrane; that stretch reads QPVLSSEH. The helical transmembrane segment at 268–287 threads the bilayer; the sequence is MAAFGVFGLCQIHAFVDYLR. Residues 288 to 300 are Cytoplasmic-facing; that stretch reads SKLNPQQFEVLFR. Residues 301-321 form a helical membrane-spanning segment; it reads SVISLVGFVLLTVGALLMLTG. The Lumenal portion of the chain corresponds to 322–356; it reads KISPWTGRFYSLLDPSYAKNNIPIIASVSEHQPTT. The short motif at 348–351 is the SVSE motif element; that stretch reads SVSE. A helical transmembrane segment spans residues 357–379; the sequence is WSSYYFDLQLLVFMFPVGLYYCF. The Cytoplasmic segment spans residues 380–385; the sequence is SNLSDA. The helical transmembrane segment at 386 to 402 threads the bilayer; it reads RIFIIMYGVTSMYFSAV. Topologically, residues 403–406 are lumenal; the sequence is MVRL. R405 is a dolichyl diphosphooligosaccharide binding site. Residues 407 to 428 traverse the membrane as a helical segment; the sequence is MLVLAPVMCILSGIGVSQVLST. Residues 429–453 are Cytoplasmic-facing; the sequence is YMKNLDISRPDKKSKKQQDSTYPIK. Residues 454 to 473 traverse the membrane as a helical segment; that stretch reads NEVASGMILVMAFFLITYTF. Over 474–705 the chain is Lumenal; sequence HSTWVTSEAY…DLDNRGLSRT (232 aa). The segment at 525-527 is interacts with target acceptor peptide in protein substrate; it reads WWD. The short motif at 525–529 is the WWDYG motif element; the sequence is WWDYG. A dolichyl diphosphooligosaccharide-binding site is contributed by Y530. N-linked (GlcNAc...) asparagine glycosylation is found at N537 and N544. Residue N548 is glycosylated (N-linked (GlcNAc...) (high mannose) asparagine). Residues 592 to 599 carry the DK motif motif; sequence DINKFLWM.

Belongs to the STT3 family. In terms of assembly, component of the oligosaccharyltransferase (OST) complex. There are 2 OST complexes, OST-A and OST-B, which contain STT3A or STT3B as catalytic subunit, respectively. OST-A and OST-B contain common core subunits RPN1, RPN2, OST48, OST4, DAD1 and TMEM258, and OST-A contains DC2/OSTC and KRTCAP2/KCP2 specific accessory subunits. OST-A complex assembly occurs through the formation of 3 subcomplexes. Subcomplex 1 contains RPN1 and TMEM258, subcomplex 2 contains the OST-A-specific subunits STT3A, DC2/OSTC, and KCP2 as well as the core subunit OST4, and subcomplex 3 contains RPN2, DAD1, and OST48. The OST-A complex can form stable complexes with the Sec61 complex or with both the Sec61 and TRAP complexes. The cofactor is Mg(2+). Mn(2+) is required as a cofactor.

The protein localises to the endoplasmic reticulum. The protein resides in the endoplasmic reticulum membrane. The catalysed reaction is a di-trans,poly-cis-dolichyl diphosphooligosaccharide + L-asparaginyl-[protein] = N(4)-(oligosaccharide-(1-&gt;4)-N-acetyl-beta-D-glucosaminyl-(1-&gt;4)-N-acetyl-beta-D-glucosaminyl)-L-asparaginyl-[protein] + a di-trans,poly-cis-dolichyl diphosphate + H(+). Its pathway is protein modification; protein glycosylation. In terms of biological role, catalytic subunit of the oligosaccharyl transferase (OST) complex that catalyzes the initial transfer of a defined glycan (Glc(3)Man(9)GlcNAc(2) in eukaryotes) from the lipid carrier dolichol-pyrophosphate to an asparagine residue within an Asn-X-Ser/Thr consensus motif in nascent polypeptide chains, the first step in protein N-glycosylation. N-glycosylation occurs cotranslationally and the complex associates with the Sec61 complex at the channel-forming translocon complex that mediates protein translocation across the endoplasmic reticulum (ER). All subunits are required for a maximal enzyme activity. This subunit contains the active site and the acceptor peptide and donor lipid-linked oligosaccharide (LLO) binding pockets. STT3A is present in the majority of OST complexes and mediates cotranslational N-glycosylation of most sites on target proteins, while STT3B-containing complexes are required for efficient post-translational glycosylation and mediate glycosylation of sites that have been skipped by STT3A. STT3A-containing OST-A complex is also required to prevent hyperglycosylation of some target proteins by preventing glycosylation of facultative sites before folding of target proteins is completed. The chain is Dolichyl-diphosphooligosaccharide--protein glycosyltransferase subunit STT3A from Mus musculus (Mouse).